The sequence spans 188 residues: Probable nicotinate-nucleotide adenylyltransferase (188 aa).

Belongs to the NadD family.

It carries out the reaction nicotinate beta-D-ribonucleotide + ATP + H(+) = deamido-NAD(+) + diphosphate. It participates in cofactor biosynthesis; NAD(+) biosynthesis; deamido-NAD(+) from nicotinate D-ribonucleotide: step 1/1. Catalyzes the reversible adenylation of nicotinate mononucleotide (NaMN) to nicotinic acid adenine dinucleotide (NaAD). The sequence is that of Probable nicotinate-nucleotide adenylyltransferase from Listeria monocytogenes serovar 1/2a (strain ATCC BAA-679 / EGD-e).